A 353-amino-acid polypeptide reads, in one-letter code: Putative glycosyltransferase TagX (353 aa).

It belongs to the glycosyltransferase 2 family.

The sequence is that of Putative glycosyltransferase TagX (tagX) from Staphylococcus aureus (strain MRSA252).